The primary structure comprises 182 residues: Probable RNA 2'-phosphotransferase (182 aa).

This sequence belongs to the KptA/TPT1 family.

Its function is as follows. Removes the 2'-phosphate from RNA via an intermediate in which the phosphate is ADP-ribosylated by NAD followed by a presumed transesterification to release the RNA and generate ADP-ribose 1''-2''-cyclic phosphate (APPR&gt;P). May function as an ADP-ribosylase. The chain is Probable RNA 2'-phosphotransferase from Pseudomonas fluorescens (strain ATCC BAA-477 / NRRL B-23932 / Pf-5).